The sequence spans 345 residues: KH domain-containing, RNA-binding, signal transduction-associated protein 2 (345 aa).

Residues L65–L131 enclose the KH domain. Disordered regions lie at residues L178–A224 and S321–Y345. Positions G336–Y345 are enriched in basic and acidic residues.

The protein belongs to the KHDRBS family.

The protein localises to the nucleus. RNA-binding protein that plays a role in the regulation of alternative splicing. The chain is KH domain-containing, RNA-binding, signal transduction-associated protein 2 (khdrbs2) from Xenopus tropicalis (Western clawed frog).